We begin with the raw amino-acid sequence, 250 residues long: Indole-3-glycerol phosphate synthase (250 aa).

The protein belongs to the TrpC family.

The enzyme catalyses 1-(2-carboxyphenylamino)-1-deoxy-D-ribulose 5-phosphate + H(+) = (1S,2R)-1-C-(indol-3-yl)glycerol 3-phosphate + CO2 + H2O. The protein operates within amino-acid biosynthesis; L-tryptophan biosynthesis; L-tryptophan from chorismate: step 4/5. This is Indole-3-glycerol phosphate synthase from Metallosphaera sedula (strain ATCC 51363 / DSM 5348 / JCM 9185 / NBRC 15509 / TH2).